A 613-amino-acid polypeptide reads, in one-letter code: Transcription factor MTB1 (613 aa).

The JAZ-interaction domain stretch occupies residues L48 to F130. Disordered stretches follow at residues E256–D285 and A391–Q441. Positions G260 to A270 are enriched in polar residues. Composition is skewed to basic and acidic residues over residues V394–R417 and N427–Q441. The segment at E430–R443 is basic motif; degenerate. The bHLH domain occupies E430–L479. A helix-loop-helix motif region spans residues E444–L479. Positions R490 to Q513 are disordered. The span at G495–I512 shows a compositional bias: polar residues.

Interacts with MYC2 (via N-terminus). MTB1 competes with MED25 for binding to MYC2. Interacts (via N-terminus) with JAZ7.

It localises to the nucleus. In terms of biological role, transcription factor that negatively regulates jasmonate (JA) signaling. Negatively regulates JA-dependent response to wounding, JA-induced expression of defense genes, JA-dependent responses against herbivorous insects, and JA-dependent resistance against Botrytis cinerea infection. Plays a positive role in resistance against the bacterial pathogen Pseudomonas syringae pv tomato DC3000. This Solanum lycopersicum (Tomato) protein is Transcription factor MTB1.